Reading from the N-terminus, the 407-residue chain is Argininosuccinate synthase (407 aa).

ATP contacts are provided by residues 16-24 (AYSGGLDTS) and Ala44. Residues Tyr96 and Ser101 each coordinate L-citrulline. Gly126 serves as a coordination point for ATP. Positions 128, 132, and 133 each coordinate L-aspartate. Asn132 contributes to the L-citrulline binding site. The L-citrulline site is built by Arg136, Ser185, Ser194, Glu270, and Tyr282.

Belongs to the argininosuccinate synthase family. Type 1 subfamily. Homotetramer.

It localises to the cytoplasm. The catalysed reaction is L-citrulline + L-aspartate + ATP = 2-(N(omega)-L-arginino)succinate + AMP + diphosphate + H(+). It functions in the pathway amino-acid biosynthesis; L-arginine biosynthesis; L-arginine from L-ornithine and carbamoyl phosphate: step 2/3. The sequence is that of Argininosuccinate synthase from Shewanella loihica (strain ATCC BAA-1088 / PV-4).